Consider the following 147-residue polypeptide: Protein phosphatase 1 regulatory subunit 14A (147 aa).

Over residues 1–11 the composition is skewed to basic residues; that stretch reads MAAQRLGKRVL. The interval 1 to 37 is disordered; it reads MAAQRLGKRVLSKLQSPSRARGPGGSPSGLQKRHARV. Ser26 carries the phosphoserine modification. Positions 35-120 are inhibitory; sequence ARVTVKYDRR…LLAKLRGLHK (86 aa). A Phosphothreonine modification is found at Thr38. The tract at residues 118–147 is disordered; sequence LHKQPGFPQPSPSDDPSLSPRQDPAHTAPP. Ser128, Ser134, and Ser136 each carry phosphoserine.

The protein belongs to the PP1 inhibitor family.

The protein resides in the cytoplasm. Functionally, inhibitor of PPP1CA. Has over 1000-fold higher inhibitory activity when phosphorylated, creating a molecular switch for regulating the phosphorylation status of PPP1CA substrates and smooth muscle contraction. The polypeptide is Protein phosphatase 1 regulatory subunit 14A (Ppp1r14a) (Rattus norvegicus (Rat)).